Consider the following 404-residue polypeptide: Cysteine desulfurase IscS (404 aa).

Pyridoxal 5'-phosphate contacts are provided by residues 75 to 76, Asn-155, Gln-183, and 203 to 205; these read AT and SAH. Lys-206 is modified (N6-(pyridoxal phosphate)lysine). Thr-243 is a pyridoxal 5'-phosphate binding site. Catalysis depends on Cys-328, which acts as the Cysteine persulfide intermediate. Cys-328 provides a ligand contact to [2Fe-2S] cluster.

Belongs to the class-V pyridoxal-phosphate-dependent aminotransferase family. NifS/IscS subfamily. In terms of assembly, homodimer. Forms a heterotetramer with IscU, interacts with other sulfur acceptors. Pyridoxal 5'-phosphate serves as cofactor.

Its subcellular location is the cytoplasm. The enzyme catalyses (sulfur carrier)-H + L-cysteine = (sulfur carrier)-SH + L-alanine. The protein operates within cofactor biosynthesis; iron-sulfur cluster biosynthesis. Master enzyme that delivers sulfur to a number of partners involved in Fe-S cluster assembly, tRNA modification or cofactor biosynthesis. Catalyzes the removal of elemental sulfur atoms from cysteine to produce alanine. Functions as a sulfur delivery protein for Fe-S cluster synthesis onto IscU, an Fe-S scaffold assembly protein, as well as other S acceptor proteins. This Neisseria gonorrhoeae (strain ATCC 700825 / FA 1090) protein is Cysteine desulfurase IscS.